Here is a 335-residue protein sequence, read N- to C-terminus: NADH-quinone oxidoreductase subunit H (335 aa).

The next 8 helical transmembrane spans lie at 12-32 (IIAV…GALL), 81-101 (VIFT…FAVI), 114-134 (IGLL…LFAG), 154-174 (VSYE…VGSF), 187-207 (LWFI…GVAV), 238-258 (FFVG…TLFF), 270-290 (SLAF…FILL), and 307-327 (WKFC…IVLL).

The protein belongs to the complex I subunit 1 family. In terms of assembly, NDH-1 is composed of 13 different subunits. Subunits NuoA, H, J, K, L, M, N constitute the membrane sector of the complex.

It is found in the cell inner membrane. The catalysed reaction is a quinone + NADH + 5 H(+)(in) = a quinol + NAD(+) + 4 H(+)(out). Functionally, NDH-1 shuttles electrons from NADH, via FMN and iron-sulfur (Fe-S) centers, to quinones in the respiratory chain. The immediate electron acceptor for the enzyme in this species is believed to be ubiquinone. Couples the redox reaction to proton translocation (for every two electrons transferred, four hydrogen ions are translocated across the cytoplasmic membrane), and thus conserves the redox energy in a proton gradient. This subunit may bind ubiquinone. The polypeptide is NADH-quinone oxidoreductase subunit H (Pseudomonas syringae pv. syringae (strain B728a)).